Consider the following 229-residue polypeptide: ATPase SWSAP1 (229 aa).

Residues 209-229 (PWPTQAGDPSSGKGSSSGGQP) form a disordered region.

Interacts with ZSWIM7; they form a functional complex involved in homologous recombination repair and stabilize each other. Interacts with RAD51, RAD51B, RAD51C, RAD51D and XRCC3; involved in homologous recombination repair.

The protein resides in the nucleus. In terms of biological role, ATPase which is preferentially stimulated by single-stranded DNA and is involved in homologous recombination repair (HRR). Has a DNA-binding activity which is independent of its ATPase activity. In Homo sapiens (Human), this protein is ATPase SWSAP1 (SWSAP1).